The following is a 75-amino-acid chain: Small ribosomal subunit protein bS18 (75 aa).

The protein belongs to the bacterial ribosomal protein bS18 family. In terms of assembly, part of the 30S ribosomal subunit. Forms a tight heterodimer with protein bS6.

Binds as a heterodimer with protein bS6 to the central domain of the 16S rRNA, where it helps stabilize the platform of the 30S subunit. This Acinetobacter baumannii (strain AB307-0294) protein is Small ribosomal subunit protein bS18.